Reading from the N-terminus, the 185-residue chain is Ribosome-recycling factor (185 aa).

It belongs to the RRF family.

The protein resides in the cytoplasm. Functionally, responsible for the release of ribosomes from messenger RNA at the termination of protein biosynthesis. May increase the efficiency of translation by recycling ribosomes from one round of translation to another. This Salinispora arenicola (strain CNS-205) protein is Ribosome-recycling factor.